Reading from the N-terminus, the 86-residue chain is Exodeoxyribonuclease 7 small subunit (86 aa).

Belongs to the XseB family. Heterooligomer composed of large and small subunits.

The protein resides in the cytoplasm. The catalysed reaction is Exonucleolytic cleavage in either 5'- to 3'- or 3'- to 5'-direction to yield nucleoside 5'-phosphates.. In terms of biological role, bidirectionally degrades single-stranded DNA into large acid-insoluble oligonucleotides, which are then degraded further into small acid-soluble oligonucleotides. The polypeptide is Exodeoxyribonuclease 7 small subunit (Bacillus licheniformis (strain ATCC 14580 / DSM 13 / JCM 2505 / CCUG 7422 / NBRC 12200 / NCIMB 9375 / NCTC 10341 / NRRL NRS-1264 / Gibson 46)).